The chain runs to 301 residues: Sulfate adenylyltransferase subunit 2 1 (301 aa).

Belongs to the PAPS reductase family. CysD subfamily. Heterodimer composed of CysD, the smaller subunit, and CysN.

It catalyses the reaction sulfate + ATP + H(+) = adenosine 5'-phosphosulfate + diphosphate. Its pathway is sulfur metabolism; hydrogen sulfide biosynthesis; sulfite from sulfate: step 1/3. Functionally, with CysN forms the ATP sulfurylase (ATPS) that catalyzes the adenylation of sulfate producing adenosine 5'-phosphosulfate (APS) and diphosphate, the first enzymatic step in sulfur assimilation pathway. APS synthesis involves the formation of a high-energy phosphoric-sulfuric acid anhydride bond driven by GTP hydrolysis by CysN coupled to ATP hydrolysis by CysD. The sequence is that of Sulfate adenylyltransferase subunit 2 1 from Shewanella sediminis (strain HAW-EB3).